We begin with the raw amino-acid sequence, 150 residues long: uncharacterized protein (150 aa).

The first 39 residues, 1-39 (MKQRFSQVATVIFFVMSIRSPRNLGFFFTLALFVVLVCS), serve as a signal peptide directing secretion.

This is an uncharacterized protein from Saccharomyces cerevisiae (strain ATCC 204508 / S288c) (Baker's yeast).